The following is a 138-amino-acid chain: MARPVKVCELAHHLNIPIWEVLLPCNFCTGFLTYQELLEFDYKDFNLLWKDGFVFGCCAACAYRSAYHEFTNYHQEIVVGIEIEGRAAANIAEIVVRCLICLKRLDLLEKLDICAQHREFHRVRNRWKGVCRHCRVIE.

Zinc fingers lie at residues 25-61 and 98-134; these read CNFC…CAAC and CLIC…CRHC.

This sequence belongs to the papillomaviridae E6 protein family. Forms homodimers. Interacts with ubiquitin-protein ligase UBE3A/E6-AP; this interaction stimulates UBE3A ubiquitin activity. Interacts with host BAK1.

It is found in the host cytoplasm. The protein localises to the host nucleus. In terms of biological role, plays a major role in the induction and maintenance of cellular transformation. E6 associates with host UBE3A/E6-AP ubiquitin-protein ligase and modulates its activity. Protects host keratinocytes from apoptosis by mediating the degradation of host BAK1. May also inhibit host immune response. The sequence is that of Protein E6 from Homo sapiens (Human).